The sequence spans 359 residues: Pyruvate dehydrogenase E1 component subunit beta, mitochondrial (359 aa).

The N-terminal 30 residues, 1 to 30 (MAAVAGLVRGPLRQASGLLKRRFHRSAPAA), are a transit peptide targeting the mitochondrion. Phosphotyrosine is present on Tyr67. Glu89 contacts thiamine diphosphate. K(+) is bound by residues Ile142, Ala190, Ile191, Asp193, and Asn195. Lys354 bears the N6-acetyllysine mark.

Heterotetramer of two PDHA1 and two PDHB subunits. The heterotetramer interacts with DLAT, and is part of the multimeric pyruvate dehydrogenase complex that contains multiple copies of pyruvate dehydrogenase (E1), dihydrolipoamide acetyltransferase (DLAT, E2) and lipoamide dehydrogenase (DLD, E3). These subunits are bound to an inner core composed of about 48 DLAT and 12 PDHX molecules. Interacts with DLAT. The cofactor is thiamine diphosphate.

The protein localises to the mitochondrion matrix. It carries out the reaction N(6)-[(R)-lipoyl]-L-lysyl-[protein] + pyruvate + H(+) = N(6)-[(R)-S(8)-acetyldihydrolipoyl]-L-lysyl-[protein] + CO2. Functionally, the pyruvate dehydrogenase complex catalyzes the overall conversion of pyruvate to acetyl-CoA and CO(2), and thereby links the glycolytic pathway to the tricarboxylic cycle. This chain is Pyruvate dehydrogenase E1 component subunit beta, mitochondrial (Pdhb), found in Rattus norvegicus (Rat).